The chain runs to 248 residues: Ribosomal RNA small subunit methyltransferase G (248 aa).

S-adenosyl-L-methionine-binding positions include Gly-85, Phe-90, 137 to 138 (IE), and Arg-156.

Belongs to the methyltransferase superfamily. RNA methyltransferase RsmG family.

Its subcellular location is the cytoplasm. In terms of biological role, specifically methylates the N7 position of a guanine in 16S rRNA. This Parasynechococcus marenigrum (strain WH8102) protein is Ribosomal RNA small subunit methyltransferase G.